The primary structure comprises 1961 residues: MSEEPKEKPAKPAHRKRKGKKSDANASYLRAARAGHLEKALDYIKNGVDVNICNQNGLNALHLASKEGHVEVVSELLQREANVDAATKKGNTALHIASLAGQAEVVKVLVTNGANVNAQSQNGFTPLYMAAQENHLEVVRFLLDNGASQSLATEDGFTPLAVALQQGHDQVVSLLLENDTKGKVRLPALHIAARKDDTKAAALLLQNDTNADVESKSGFTPLHIAAHYGNINVATLLLNRAAAVDFTARNDITPLHVASKRGNANMVKLLLDRGAKIDAKTRDGLTPLHCGARSGHEQVVEMLLDRSAPILSKTKNGLSPLHMATQGDHLNCVQLLLQHNVPVDDVTNDYLTALHVAAHCGHYKVAKVLLDKKASPNAKALNGFTPLHIACKKNRIRVMELLLKHGASIQAVTESGLTPIHVAAFMGHVNIVSQLMHHGASPNTTNVRGETALHMAARSGQAEVVRYLVQDGAQVEAKAKDDQTPLHISARLGKADIVQQLLQQGASPNAATTSGYTPLHLAAREGHEDVAAFLLDHGASLSITTKKGFTPLHVAAKYGKLEVASLLLQKSASPDAAGKSGLTPLHVAAHYDNQKVALLLLDQGASPHAAAKNGYTPLHIAAKKNQMDIATSLLEYGADANAVTRQGIASVHLAAQEGHVDMVSLLLSRNANVNLSNKSGLTPLHLAAQEDRVNVAEVLVNQGAHVDAQTKMGYTPLHVGCHYGNIKIVNFLLQHSAKVNAKTKNGYTALHQAAQQGHTHIINVLLQNNASPNELTVNGNTALAIARRLGYISVVDTLKVVTEEIMTTTTITEKHKMNVPETMNEVLDMSDDEVRKASAPEKLSDGEYISDGEEGDKCTWFKIPKVQEVLVKSEDAITGDTDKYLGPQDLKELGDDSLPAEGYVGFSLGARSASLRSFSSDRSYTLNRSSYARDSMMIEELLVPSKEQHLTFTREFDSDSLRHYSWAADTLDNVNLVSSPVHSGFLVSFMVDARGGSMRGSRHHGMRIIIPPRKCTAPTRITCRLVKRHKLANPPPMVEGEGLASRLVEMGPAGAQFLGPVIVEIPHFGSMRGKERELIVLRSENGETWKEHQFDSKNEDLAELLNGMDEELDSPEELGTKRICRIITKDFPQYFAVVSRIKQESNQIGPEGGILSSTTVPLVQASFPEGALTKRIRVGLQAQPVPEETVKKILGNKATFSPIVTVEPRRRKFHKPITMTIPVPPPSGEGVSNGYKGDATPNLRLLCSITGGTSPAQWEDITGTTPLTFIKDCVSFTTNVSARFWLADCHQVLETVGLASQLYRELICVPYMAKFVVFAKTNDPVESSLRCFCMTDDRVDKTLEQQENFEEVARSKDIEVLEGKPIYVDCYGNLAPLTKGGQQLVFNFYSFKENRLPFSIKIRDTSQEPCGRLSFLKEPKTTKGLPQTAVCNLNITLPAHKKAEKADRRQSFASLALRKRYSYLTEPSMSPQSPCERTDIRMAIVADHLGLSWTELARELNFSVDEINQIRVENPNSLISQSFMLLKKWVTRDGKNATTDALTSVLTKINRIDIVTLLEGPIFDYGNISGTRSFADENNVFHDPVDGHPSFQVELETPMGLYCTPPNPFQQDDHFSDISSIESPFRTPSRLSDGLVPSQGNIEHPTGGPPVVTAEDTSLEDSKMDDSVTVTDPADPLDVDESQLKDLCQSECAQCWASVPGIPNDGRQAEPLRPQTRKVGMSSEQQEKGKSGPDEEVTEDKVKSLFEDIQLEEVEAEEMTEDQGQAMLNRVQRAELAMSSLAGWQNETPSGSLESPAQARRLTGGLLDRLDDSSDQARDSITSYLTGEPGKIEANGNHTAEVIPEAKAKPYFPESQNDIGKQSIKENLKPKTHGCGRTEEPVSPLTAYQKSLEETSKLVIEDAPKPCVPVGMKKMTRTTADGKARLNLQEEEGSTRSEPKQGEGYKVKTKKEIRNVEKKTH.

Over residues 1 to 10 (MSEEPKEKPA) the composition is skewed to basic and acidic residues. A disordered region spans residues 1 to 25 (MSEEPKEKPAKPAHRKRKGKKSDAN). Positions 11-20 (KPAHRKRKGK) are enriched in basic residues. Residue S22 is modified to Phosphoserine. 23 ANK repeats span residues 56–85 (NGLN…NVDA), 89–118 (KGNT…NVNA), 122–151 (NGFT…SQSL), 155–184 (DGFT…KGKV), 186–213 (LPAL…NADV), 217–246 (SGFT…AVDF), 250–279 (NDIT…KIDA), 283–312 (DGLT…PILS), 316–345 (NGLS…PVDD), 349–378 (DYLT…SPNA), 382–411 (NGFT…SIQA), 415–444 (SGLT…SPNT), 448–477 (RGET…QVEA), 481–510 (DDQT…SPNA), 514–543 (SGYT…SLSI), 547–576 (KGFT…SPDA), 580–609 (SGLT…SPHA), 613–642 (NGYT…DANA), 646–675 (QGIA…NVNL), 679–708 (SGLT…HVDA), 712–741 (MGYT…KVNA), 745–774 (NGYT…SPNE), and 778–807 (NGNT…EIMT). Position 606 is a phosphoserine (S606). L732 bears the Phosphoserine mark. Phosphoserine is present on residues S830, S844, S850, S873, S914, S917, S923, S958, S960, and S1114. ZU5 domains follow at residues 985 to 1140 (FLVS…VVSR) and 1142 to 1289 (KQES…LADC). A UPA domain region spans residues 1274-1408 (VSFTTNVSAR…SIKIRDTSQE (135 aa)). 5 positions are modified to phosphoserine: S1451, S1462, S1470, S1473, and G1560. Positions 1478–1562 (TDIRMAIVAD…DIVTLLEGPI (85 aa)) constitute a Death domain. Disordered stretches follow at residues 1606 to 1678 (PNPF…DPLD), 1698 to 1740 (SVPG…VTED), 1784 to 1818 (WQNE…DQAR), 1844 to 1884 (PEAK…PVSP), and 1915 to 1961 (MTRT…KKTH). Residues 1725-1740 (QQEKGKSGPDEEVTED) show a composition bias toward basic and acidic residues. The span at 1784-1795 (WQNETPSGSLES) shows a compositional bias: polar residues. Phosphoserine occurs at positions 1795, 1813, and 1883. Residues 1808–1818 (DRLDDSSDQAR) are compositionally biased toward basic and acidic residues. Over residues 1933 to 1961 (GSTRSEPKQGEGYKVKTKKEIRNVEKKTH) the composition is skewed to basic and acidic residues.

May be a constituent of a NFASC/NRCAM/ankyrin G complex. Interacts with RHBG. Directly interacts with DMD and betaDAG1; this interaction does not interfere with DMD-binding and is required for DMD and betaDAG1 retention at costameres. Interacts (via N-terminal ANK repeats) with SCHIP1 isoform 7 (via C-terminus); this interaction is required for the localization at axon initial segments (AISs) and nodes of Ranvier (NRs). Interacts with PLEC and FLNC. Interacts with KCNA1; this inhibits channel activity. Interacts with SCN5A. Interacts with PKP2 and GJA1/CX43. Expressed in many epithelial tissues, muscles and axons. Expressed in kidney, brain, skin, lung, liver, intestine, pancreas, heart and testis (at protein level). In testis, expressed in Leydig cells, but very weakly or not at all in Sertoli cells or seminiferous tubules. Expressed in macrophages (at protein level).

It is found in the cytoplasm. Its subcellular location is the cytoskeleton. It localises to the cell projection. The protein localises to the axon. The protein resides in the cell membrane. It is found in the sarcolemma. Its subcellular location is the postsynaptic cell membrane. It localises to the lysosome. The protein localises to the T-tubule. Functionally, membrane-cytoskeleton linker. May participate in the maintenance/targeting of ion channels and cell adhesion molecules at the nodes of Ranvier and axonal initial segments. In skeletal muscle, required for costamere localization of DMD and betaDAG1. Regulates KCNA1 channel activity in function of dietary Mg(2+) levels, and thereby contributes to the regulation of renal Mg(2+) reabsorption. Required for intracellular adhesion and junctional conductance in myocytes, potentially via stabilization of GJA1/CX43 protein abundance and promotion of PKP2, GJA1/CX43, and SCN5A/Nav1.5 localization to cell-cell junctions. The polypeptide is Ankyrin-3 (Ank3) (Mus musculus (Mouse)).